A 1537-amino-acid chain; its full sequence is Isocyanide synthase-NRPS hybrid crmA (1537 aa).

Residues 1-502 (MFHKEAGISH…CVKAGYAALF (502 aa)) form an isocyanide synthase domain region. Positions 351–391 (PSVPVSPGMSSPSAASTSSSGASMQGSAATTPETHSPPTFT) are disordered. A compositionally biased stretch (low complexity) spans 352 to 381 (SVPVSPGMSSPSAASTSSSGASMQGSAATT). Positions 382–391 (PETHSPPTFT) are enriched in polar residues. An adenylation region spans residues 573–752 (EAINDPFCFL…GNLIPPREDW (180 aa)). One can recognise a Carrier domain in the interval 941-1019 (SSAHSIEDNV…RLSAIIALLA (79 aa)). The residue at position 977 (serine 977) is an O-(pantetheine 4'-phosphoryl)serine. The transferase stretch occupies residues 1293–1526 (RCLKTTMFLV…LEMLVTDEEF (234 aa)).

The protein in the N-terminal section; belongs to the isocyanide synthase family. In the C-terminal section; belongs to the NRP synthetase family.

Its pathway is secondary metabolite biosynthesis. Functionally, isocyanide synthase-NRPS hybrid; part of the crm gene cluster that mediates the biosynthesis of a yet unidentified copper-responsive metabolite. Converts valine into valine isocyanide that then contributes to two distinct biosynthetic pathways under copper-limiting conditions. Reaction of valine isocyanide with the imine intermediate of festuclavine results in formation of the amide bond in fumivaline A. In addition, valine isocyanide contributes to biosynthesis of a family of acylated sugar alcohols, the D-mannitol-derived fumicicolins. CrmA and associated products inhibit microbial growth from copper-starved A.fumigatus. This is Isocyanide synthase-NRPS hybrid crmA from Aspergillus fumigatus (strain ATCC MYA-4609 / CBS 101355 / FGSC A1100 / Af293) (Neosartorya fumigata).